The chain runs to 1373 residues: DNA-directed RNA polymerase subunit beta (1373 aa).

The protein belongs to the RNA polymerase beta chain family. As to quaternary structure, the RNAP catalytic core consists of 2 alpha, 1 beta, 1 beta' and 1 omega subunit. When a sigma factor is associated with the core the holoenzyme is formed, which can initiate transcription.

It catalyses the reaction RNA(n) + a ribonucleoside 5'-triphosphate = RNA(n+1) + diphosphate. Its function is as follows. DNA-dependent RNA polymerase catalyzes the transcription of DNA into RNA using the four ribonucleoside triphosphates as substrates. The protein is DNA-directed RNA polymerase subunit beta of Rickettsia akari (strain Hartford).